Here is a 378-residue protein sequence, read N- to C-terminus: Protein RecA (378 aa).

79 to 86 (GPESSGKT) is a binding site for ATP.

Belongs to the RecA family.

It is found in the cytoplasm. Functionally, can catalyze the hydrolysis of ATP in the presence of single-stranded DNA, the ATP-dependent uptake of single-stranded DNA by duplex DNA, and the ATP-dependent hybridization of homologous single-stranded DNAs. It interacts with LexA causing its activation and leading to its autocatalytic cleavage. This is Protein RecA from Streptococcus pyogenes serotype M49 (strain NZ131).